Reading from the N-terminus, the 217-residue chain is MGDILSRDTLYEAVREVLHGNQRKRRKFLETVELQISLKNYDPQKDKRFSGTVRLKSTPRPKFSVCVLGDQQHCDEAKAVDIPHMDIEALKKLNKNKKLVKKLAKKYDAFLASESLIKQIPRILGPGLNKAGKFPSLLTHNENMVAKVDEVKSTIKFQMKKVLCLAVAVGHVKMTDDELVYNIHLAVNFLVSLLKKNWQNVRALYIKSTMGKPQRLY.

Y11 carries the post-translational modification Phosphotyrosine. 2 positions are modified to N6-acetyllysine: K91 and K106. K118 carries the post-translational modification N6-acetyllysine; alternate. K118 is covalently cross-linked (Glycyl lysine isopeptide (Lys-Gly) (interchain with G-Cter in SUMO1); alternate). A Glycyl lysine isopeptide (Lys-Gly) (interchain with G-Cter in SUMO2); alternate cross-link involves residue K118. A Glycyl lysine isopeptide (Lys-Gly) (interchain with G-Cter in SUMO2) cross-link involves residue K161.

The protein belongs to the universal ribosomal protein uL1 family. As to quaternary structure, component of the large ribosomal subunit.

It localises to the cytoplasm. Component of the large ribosomal subunit. The ribosome is a large ribonucleoprotein complex responsible for the synthesis of proteins in the cell. The polypeptide is Large ribosomal subunit protein uL1 (RPL10A) (Oryctolagus cuniculus (Rabbit)).